Here is an 802-residue protein sequence, read N- to C-terminus: Epithelial sodium channel subunit delta (802 aa).

The Cytoplasmic segment spans residues 1–250 (MRAVLSQKTT…CSRGNRLKTT (250 aa)). The segment at 145–211 (KQPHGGALTS…PPPPKEGHQE (67 aa)) is disordered. Over residues 166–176 (CHLKGWQHRPT) the composition is skewed to basic residues. Pro residues predominate over residues 192–205 (PPRPGPPSAPPPPP). Residues 251–271 (SWGLLSLGALVALCWQLGLLF) traverse the membrane as a helical segment. Residues 272–694 (ERHWHRPVLM…VPQLLSAMGS (423 aa)) are Extracellular-facing. N-linked (GlcNAc...) asparagine glycosylation is found at N330 and N548. Residues 695–715 (LCSLWFGASVLSLLELLELLL) form a helical membrane-spanning segment. Residues 716–802 (DASALTLVLG…GPQPLETLDT (87 aa)) lie on the Cytoplasmic side of the membrane. The tract at residues 738–777 (RASPASGASSIKPEASQMPPPAGGTSDDPEPSGPHLPRVM) is disordered.

It belongs to the amiloride-sensitive sodium channel (TC 1.A.6) family. SCNN1D subfamily. As to quaternary structure, can form an alternative heterotrimeric epithelial sodium channel (ENaC), composed of a delta (SCNN1D), beta (SCNN1B), and gamma (SCNN1G) subunit, where the delta (SCNN1D) subunit replaces the alpha (SCNN1A) subunit. In terms of tissue distribution, not specifically expressed in epithelial cells.

Its subcellular location is the apical cell membrane. The catalysed reaction is Na(+)(in) = Na(+)(out). With respect to regulation, originally identified and characterized by its inhibition by the diuretic drug amiloride. Potential alternative pore-forming subunit of the epithelial sodium channel (ENaC), capable of replacing the alpha/SCNN1A subunit, creating a more active channel with distinct properties. ENaC functions in epithelial tissues, where it facilitates the electrodiffusion of sodium ions from the extracellular fluid through the apical membrane of cells, with water following osmotically, regulating sodium balance and fluid homeostasis. This subunit could also function independently as a sodium channel or assemble into other tissue-specific heterotrimeric sodium channels. Its function is as follows. ENaC channels including this isoform exhibit greater conductance. The protein is Epithelial sodium channel subunit delta of Homo sapiens (Human).